A 429-amino-acid polypeptide reads, in one-letter code: MKLQKPKGTQDILPPESAKWQYVEGFAREIFKRYNYAEVRTPIFEHYEVISRSVGDTTDIVTKEMYDFYDKGDRHITLRPEGTAPVVRSYVENKLFAPEVQKPSKFYYMGPMFRYERPQAGRLRQFHQIGVECFGSSNPATDVETIAMAAHFLKEIGIQGVKLHLNTLGNPESRAAYRQALIDYLTPLKETLSKDSQRRLEENPLRVLDSKEKEDKEAVENAPSILDFLDEESQAHFDAVRQMLENLGVDYIIDTNMVRGLDYYNHTIFEFITEIEGNDLTVCAGGRYDGLVSYFGGPETAGFGFGLGVERLLLILEKQGVTLPIENALDVYIAVLGEGANIKALELVQALRQQGFKAERDYLNRKLKAQFKSADVFVAKTLITLGESEVESGQVTVKNNQTREEVQVSLETISQNFSEIFEKLGFYTQ.

This sequence belongs to the class-II aminoacyl-tRNA synthetase family. Homodimer.

Its subcellular location is the cytoplasm. The enzyme catalyses tRNA(His) + L-histidine + ATP = L-histidyl-tRNA(His) + AMP + diphosphate + H(+). This Streptococcus pneumoniae (strain CGSP14) protein is Histidine--tRNA ligase.